A 354-amino-acid polypeptide reads, in one-letter code: Isopentenyl-diphosphate delta-isomerase (354 aa).

Residue R6–K7 coordinates substrate. FMN is bound by residues A63–T65, S93, and N122. Position 93-95 (S93–R95) interacts with substrate. Position 160 (Q160) interacts with substrate. E161 is a Mg(2+) binding site. FMN-binding positions include K192, T221, G273–R275, and S294–Q295.

The protein belongs to the IPP isomerase type 2 family. Homooctamer. Dimer of tetramers. FMN serves as cofactor. The cofactor is NADPH. Requires Mg(2+) as cofactor.

It is found in the cytoplasm. The catalysed reaction is isopentenyl diphosphate = dimethylallyl diphosphate. Involved in the biosynthesis of isoprenoids. Catalyzes the 1,3-allylic rearrangement of the homoallylic substrate isopentenyl (IPP) to its allylic isomer, dimethylallyl diphosphate (DMAPP). This Pyrobaculum islandicum (strain DSM 4184 / JCM 9189 / GEO3) protein is Isopentenyl-diphosphate delta-isomerase.